Consider the following 335-residue polypeptide: Protein PXR1 (335 aa).

The 47-residue stretch at 25–71 folds into the G-patch domain; sequence KSRFGHKYLEKLGWEPGKGLGHASHAMSTHIKVTIKDDTMGLGAKLK. The disordered stretch occupies residues 155-310; that stretch reads DDAEDAKVSG…PPTISTRLSV (156 aa). Over residues 163–175 the composition is skewed to basic residues; the sequence is SGKHRDRKSRAKR. Residues 183-209 are compositionally biased toward basic and acidic residues; it reads LKEKCRDIDRTRKSKRKEKEQEKEKNR. The span at 226-257 shows a compositional bias: basic residues; the sequence is KKDKKDKKEKKEKKEKKEKKEKKHKEKSNKRL.

Belongs to the PINX1 family.

The protein resides in the nucleus. Its subcellular location is the nucleolus. Involved in rRNA-processing at A0, A1 and A2 sites and negatively regulates telomerase. This Eremothecium gossypii (strain ATCC 10895 / CBS 109.51 / FGSC 9923 / NRRL Y-1056) (Yeast) protein is Protein PXR1 (PXR1).